Consider the following 641-residue polypeptide: 1-deoxy-D-xylulose-5-phosphate synthase (641 aa).

Residues H80 and 121–123 each bind thiamine diphosphate; that span reads GHS. D152 contacts Mg(2+). Thiamine diphosphate-binding positions include 153–154, N181, Y290, and E372; that span reads GS. N181 is a Mg(2+) binding site.

Belongs to the transketolase family. DXPS subfamily. As to quaternary structure, homodimer. Mg(2+) is required as a cofactor. Requires thiamine diphosphate as cofactor.

It carries out the reaction D-glyceraldehyde 3-phosphate + pyruvate + H(+) = 1-deoxy-D-xylulose 5-phosphate + CO2. Its pathway is metabolic intermediate biosynthesis; 1-deoxy-D-xylulose 5-phosphate biosynthesis; 1-deoxy-D-xylulose 5-phosphate from D-glyceraldehyde 3-phosphate and pyruvate: step 1/1. Catalyzes the acyloin condensation reaction between C atoms 2 and 3 of pyruvate and glyceraldehyde 3-phosphate to yield 1-deoxy-D-xylulose-5-phosphate (DXP). This is 1-deoxy-D-xylulose-5-phosphate synthase from Rhodobacter capsulatus (Rhodopseudomonas capsulata).